The chain runs to 540 residues: CBL-interacting protein kinase 12 (540 aa).

The disordered stretch occupies residues 1 to 23 (MLMATVSPARREPTPQAVRASPM). Positions 46–300 (YELGRVLGQG…VPEIIESDWF (255 aa)) constitute a Protein kinase domain. ATP-binding positions include 52-60 (LGQGSFAKV) and K75. The Proton acceptor role is filled by D168. The segment at 186–215 (DFGLAAGPDQFDPDGLLHTFCGTPAYVAPE) is activation loop. Residues 333 to 348 (PPPLGLAPPVPPPPQG) are compositionally biased toward pro residues. The interval 333–380 (PPPLGLAPPVPPPPQGDDPDGSGSESDSSVVSCPATLSTGESQRVRGS) is disordered. Over residues 353–364 (GSGSESDSSVVS) the composition is skewed to low complexity. Positions 370 to 406 (STGESQRVRGSLPRPASLNAFDIISFSKGFNLSGLFE) constitute an NAF domain. The interval 409-438 (GNEIRFVSGEPMSDIVKKLEEIAKVKSFTV) is PPI.

The protein belongs to the protein kinase superfamily. CAMK Ser/Thr protein kinase family. SNF1 subfamily. It depends on Mg(2+) as a cofactor. Autophosphorylated. In terms of tissue distribution, expressed at low levels in leaf blades.

The enzyme catalyses L-seryl-[protein] + ATP = O-phospho-L-seryl-[protein] + ADP + H(+). It carries out the reaction L-threonyl-[protein] + ATP = O-phospho-L-threonyl-[protein] + ADP + H(+). Functionally, involved in drought stress tolerance. CIPK serine-threonine protein kinases interact with CBL proteins. Binding of a CBL protein to the regulatory NAF domain of CIPK protein lead to the activation of the kinase in a calcium-dependent manner. This Oryza sativa subsp. japonica (Rice) protein is CBL-interacting protein kinase 12 (CIPK12).